Here is a 572-residue protein sequence, read N- to C-terminus: Neuronal acetylcholine receptor subunit alpha-9-I (572 aa).

The N-terminal stretch at 1–19 (MKTVVLLTWISCWIDVCTS) is a signal peptide. Residues 20 to 232 (AQGRYAQKLL…YTLHLKRRSL (213 aa)) are Extracellular-facing. Asparagine 51 carries an N-linked (GlcNAc...) asparagine glycan. Cysteine 149 and cysteine 163 are disulfide-bonded. N-linked (GlcNAc...) asparagine glycosylation occurs at asparagine 164. Residues cysteine 213 and cysteine 214 are joined by a disulfide bond. Transmembrane regions (helical) follow at residues 233-253 (FYIFNLLLPCFLISFLAPLGF), 263-283 (VSLGVTVLLALTVFQLMVAES), and 297-317 (YIATMTMITASTSLTIFIMNI). The Cytoplasmic segment spans residues 318-550 (HFCGAEAKPV…WKKVAKVMDR (233 aa)). The interval 405 to 458 (GHLQNHHSTHQNHLDNCRYANGGHRDDHYSNRSNQNHHSNRSQTSKGEGGEEKR) is disordered. Residues 435–447 (NRSNQNHHSNRSQ) show a composition bias toward low complexity. The helical transmembrane segment at 551-571 (FFMWIFFIMVFLMSILIIGKA) threads the bilayer.

This sequence belongs to the ligand-gated ion channel (TC 1.A.9) family. Acetylcholine receptor (TC 1.A.9.1) subfamily. Expressed in the liver, olfactory mucosa, pituitary gland, hair cells of the saccule and spleen.

It is found in the postsynaptic cell membrane. It localises to the cell membrane. The protein is Neuronal acetylcholine receptor subunit alpha-9-I (nachra9) of Oncorhynchus mykiss (Rainbow trout).